Reading from the N-terminus, the 82-residue chain is MKKILLSLVVFYQRFISPLTPPTCRFYPTCSQYTREAIEYHGALKGLYLGVRRILKCHPLHKGGFDPVPLKKDKNSKTTHHH.

Residues 63–82 (GGFDPVPLKKDKNSKTTHHH) form a disordered region.

Belongs to the UPF0161 family.

The protein resides in the cell membrane. Could be involved in insertion of integral membrane proteins into the membrane. The polypeptide is Putative membrane protein insertion efficiency factor (Staphylococcus epidermidis (strain ATCC 35984 / DSM 28319 / BCRC 17069 / CCUG 31568 / BM 3577 / RP62A)).